A 349-amino-acid polypeptide reads, in one-letter code: Isopentenyl-diphosphate delta-isomerase (349 aa).

Substrate is bound at residue 6 to 7 (RK). Residues 62–64 (AMT), Ser93, and Asn122 contribute to the FMN site. Gln152 serves as a coordination point for substrate. Glu153 provides a ligand contact to Mg(2+). FMN contacts are provided by residues Lys184, Thr214, 258–259 (GG), and 280–281 (AG).

The protein belongs to the IPP isomerase type 2 family. Homooctamer. Dimer of tetramers. FMN is required as a cofactor. The cofactor is NADPH. It depends on Mg(2+) as a cofactor.

It is found in the cytoplasm. It carries out the reaction isopentenyl diphosphate = dimethylallyl diphosphate. Its function is as follows. Involved in the biosynthesis of isoprenoids. Catalyzes the 1,3-allylic rearrangement of the homoallylic substrate isopentenyl (IPP) to its allylic isomer, dimethylallyl diphosphate (DMAPP). The protein is Isopentenyl-diphosphate delta-isomerase of Bacillus anthracis (strain A0248).